The chain runs to 124 residues: Large ribosomal subunit protein bL21 (124 aa).

The tract at residues 105 to 124 (NAPSIGPRVRKAKPAAEAAE) is disordered.

The protein belongs to the bacterial ribosomal protein bL21 family. As to quaternary structure, part of the 50S ribosomal subunit. Contacts protein L20.

Its function is as follows. This protein binds to 23S rRNA in the presence of protein L20. The protein is Large ribosomal subunit protein bL21 of Rhodopseudomonas palustris (strain BisA53).